The sequence spans 432 residues: EF-hand calcium-binding domain-containing protein 3 (432 aa).

EF-hand domains are found at residues Ala-45 to Asn-80 and Leu-81 to Phe-116. The Ca(2+) site is built by Asp-94, Asp-96, Asp-98, Lys-100, and Asp-105. Tyr-273 is modified (phosphotyrosine). Positions Asn-394–Gln-432 are disordered. Low complexity predominate over residues Ser-399–Leu-411. A compositionally biased stretch (basic residues) spans Arg-420–Gln-432.

This chain is EF-hand calcium-binding domain-containing protein 3 (Efcab3), found in Rattus norvegicus (Rat).